Reading from the N-terminus, the 155-residue chain is Small ribosomal subunit protein uS7c (155 aa).

Belongs to the universal ribosomal protein uS7 family. As to quaternary structure, part of the 30S ribosomal subunit.

It localises to the plastid. The protein localises to the chloroplast. In terms of biological role, one of the primary rRNA binding proteins, it binds directly to 16S rRNA where it nucleates assembly of the head domain of the 30S subunit. This is Small ribosomal subunit protein uS7c (rps7) from Cedrus deodara (Deodar cedar).